Reading from the N-terminus, the 62-residue chain is Amolopin-P2 (62 aa).

Positions methionine 1–cysteine 22 are cleaved as a signal peptide. A propeptide spanning residues glutamate 23–arginine 44 is cleaved from the precursor.

Belongs to the frog skin active peptide (FSAP) family. Amolopin subfamily. In terms of tissue distribution, expressed by the skin glands.

It localises to the secreted. Antimicrobial peptide with activity against Gram-positive bacteria. Has been tested against S.aureus (MIC=37.5 ug/mL), against B.pumilus (MIC=75.0 ug/mL), B.cereus (no activity detected). Does not show activity against Gram-negative bacteria (E.coli, B.dysenteriae, A.calcoaceticus, P.aeruginosa) and fungi (C.albicans). Does not show hemolytic activity against rabbit erythrocytes. The protein is Amolopin-P2 of Amolops loloensis (Lolokou Sucker Frog).